Reading from the N-terminus, the 91-residue chain is Class I hydrophobin 3 (91 aa).

The signal sequence occupies residues Met1–Gly17. 4 cysteine pairs are disulfide-bonded: Cys31–Cys70, Cys35–Cys61, Cys36–Cys53, and Cys71–Cys87.

Belongs to the fungal hydrophobin family. Self-assembles to form functional amyloid fibrils called rodlets. Self-assembly into fibrillar rodlets occurs spontaneously at hydrophobic:hydrophilic interfaces and the rodlets further associate laterally to form amphipathic monolayers. As to expression, expressed in conidia.

The protein resides in the secreted. It localises to the cell wall. Its function is as follows. Aerial growth, conidiation, and dispersal of filamentous fungi in the environment rely upon a capability of their secreting small amphipathic proteins called hydrophobins (HPBs) with low sequence identity. Class I can self-assemble into an outermost layer of rodlet bundles on aerial cell surfaces, conferring cellular hydrophobicity that supports fungal growth, development and dispersal; whereas Class II form highly ordered films at water-air interfaces through intermolecular interactions but contribute nothing to the rodlet structure. HYD3 is a class I hydrophobin located on the conidial surface that activates specifically the humoral and cellular immunity of Metarhizium acridum's own host insect, Locusta migratoria manilensis (Meyen) but not that of other non-host insects. Improves the resistance of locusts to both specialist and generalist fungal pathogens (wide host range) when topically applied to the cuticle, but has no effect on the fungal resistance of other insects, including Spodoptera frugiperda and Galleria mellonella. In Metarhizium acridum (strain CQMa 102), this protein is Class I hydrophobin 3.